Here is a 241-residue protein sequence, read N- to C-terminus: Small ribosomal subunit protein uS3 (241 aa).

In terms of domain architecture, KH type-2 spans 39–109 (IRQYITKNLS…QIRINVIEVQ (71 aa)). The disordered stretch occupies residues 214-241 (EEIPMPVPSQTPRRQRRRQQFEDRSGEE). Positions 232–241 (QQFEDRSGEE) are enriched in basic and acidic residues.

It belongs to the universal ribosomal protein uS3 family. Part of the 30S ribosomal subunit. Forms a tight complex with proteins S10 and S14.

In terms of biological role, binds the lower part of the 30S subunit head. Binds mRNA in the 70S ribosome, positioning it for translation. In Rippkaea orientalis (strain PCC 8801 / RF-1) (Cyanothece sp. (strain PCC 8801)), this protein is Small ribosomal subunit protein uS3.